Here is a 411-residue protein sequence, read N- to C-terminus: Multidrug resistance protein MdtA (411 aa).

Positions 1-26 (MNNNKKTKKRFSLIIILLIVIAGAIA) are cleaved as a signal peptide. Residues 35-55 (SAPPVSKDTPTANTPNRSTAG) show a composition bias toward polar residues. Residues 35-64 (SAPPVSKDTPTANTPNRSTAGSRRPPMPPV) are disordered.

It belongs to the membrane fusion protein (MFP) (TC 8.A.1) family. Part of a tripartite efflux system composed of MdtA, MdtB and MdtC.

It is found in the cell inner membrane. The chain is Multidrug resistance protein MdtA from Proteus mirabilis (strain HI4320).